The primary structure comprises 474 residues: Serine/threonine-protein kinase VRK3 (474 aa).

The span at 41–58 (HVSSFQGSKRGLNSSFET) shows a compositional bias: polar residues. The disordered stretch occupies residues 41–152 (HVSSFQGSKR…SRVTTSLEAL (112 aa)). The Nuclear localization signal signature appears at 49–64 (KRGLNSSFETSPKKVK). Phosphoserine occurs at positions 54, 55, 59, 82, 83, and 90. Residues 88-101 (TLSSSERSKGSGSR) show a composition bias toward low complexity. Residues 107 to 149 (SSPQKTRKSPQVTRGSPQKTSCSPQKTRQSPQTLKRSRVTTSL) are compositionally biased toward polar residues. Ser-108 is subject to Phosphoserine; by CDK5. A phosphoserine mark is found at Ser-115 and Ser-122. Residues 166–457 (WKLKSFQTRD…MLRNNLEALL (292 aa)) enclose the Protein kinase domain.

The protein belongs to the protein kinase superfamily. CK1 Ser/Thr protein kinase family. VRK subfamily. In terms of assembly, interacts with DUSP3. Interacts with RAN. Interacts with HSP70/HSPA1A. Phosphorylated at Ser-108 by CDK5; leading to protection of the cell against H2O2-induced apoptosis. In terms of processing, ubiquitinated by RNF144A.

It localises to the nucleus. It is found in the cytoplasm. It carries out the reaction L-seryl-[protein] + ATP = O-phospho-L-seryl-[protein] + ADP + H(+). Plays a role in the regulation of the cell cycle by phosphorylating the nuclear envelope protein barrier-to-autointegration factor/BAF that is required for disassembly and reassembly, respectively, of the nuclear envelope during mitosis. Under normal physiological conditions, negatively regulates ERK activity along with VHR/DUSP3 phosphatase in the nucleus, causing timely and transient action of ERK. Stress conditions activate CDK5 which phosphorylates VRK3 to increase VHR phosphatase activity and suppress prolonged ERK activation that causes cell death. For example, upon glutamate induction, promotes nuclear localization of HSP70/HSPA1A to inhibit ERK activation via VHR/DUSP3 phosphatase. The sequence is that of Serine/threonine-protein kinase VRK3 (VRK3) from Homo sapiens (Human).